Reading from the N-terminus, the 102-residue chain is Small ribosomal subunit protein uS10 (102 aa).

It belongs to the universal ribosomal protein uS10 family. In terms of assembly, part of the 30S ribosomal subunit.

In terms of biological role, involved in the binding of tRNA to the ribosomes. In Bacillus thuringiensis (strain Al Hakam), this protein is Small ribosomal subunit protein uS10.